The primary structure comprises 169 residues: Allophycocyanin subunit beta-18 (169 aa).

Asn-72 carries the post-translational modification N4-methylasparagine. A (2R,3E)-phycocyanobilin-binding site is contributed by Cys-82.

This sequence belongs to the phycobiliprotein family. Heterodimer of ApcE and this beta chain. Post-translationally, contains one covalently linked bilin chromophore. The chromophore is added by phycocyanobilin lyase CpcUS.

The protein localises to the cellular thylakoid membrane. Its function is as follows. A variant beta-allophycocyanin (AP) which forms a complex with ApcE, a phycobilisome terminal emitter that influences energy transfer to photosystem II. This Picosynechococcus sp. (strain ATCC 27264 / PCC 7002 / PR-6) (Agmenellum quadruplicatum) protein is Allophycocyanin subunit beta-18 (apcF).